Consider the following 77-residue polypeptide: Sec-independent protein translocase protein TatA (77 aa).

Residues 1–21 traverse the membrane as a helical segment; the sequence is MGSLSIWHWILVIAVVLLLFG. A compositionally biased stretch (basic and acidic residues) spans 42 to 60; the sequence is GMQDDDKPADKPEPAKSIE. The interval 42-77 is disordered; the sequence is GMQDDDKPADKPEPAKSIEHNAAPTAARSDVGSKAV.

This sequence belongs to the TatA/E family. The Tat system comprises two distinct complexes: a TatABC complex, containing multiple copies of TatA, TatB and TatC subunits, and a separate TatA complex, containing only TatA subunits. Substrates initially bind to the TatABC complex, which probably triggers association of the separate TatA complex to form the active translocon.

The protein localises to the cell inner membrane. In terms of biological role, part of the twin-arginine translocation (Tat) system that transports large folded proteins containing a characteristic twin-arginine motif in their signal peptide across membranes. TatA could form the protein-conducting channel of the Tat system. This is Sec-independent protein translocase protein TatA from Bradyrhizobium diazoefficiens (strain JCM 10833 / BCRC 13528 / IAM 13628 / NBRC 14792 / USDA 110).